The primary structure comprises 754 residues: Carbon catabolite repressor protein 4 homolog 6 (754 aa).

Disordered stretches follow at residues 34–65 (PYRGARGRGRGRGGRSFSDRPYNDDAGRDQFV) and 85–176 (EPYR…KTPP). Positions 50 to 61 (FSDRPYNDDAGR) are enriched in basic and acidic residues. Composition is skewed to polar residues over residues 96 to 106 (QRQQPPFNQNY) and 116 to 133 (GQWQQFRQPNQFPSNQNY). Basic and acidic residues predominate over residues 162–171 (KPSDYREWEY). Glu237 is a binding site for Mg(2+). 2 disordered regions span residues 404–431 (VSAEFRPPRPENYTTRYQSANKSPQGQV) and 494–558 (IENR…DQDI). Polar residues-rich tracts occupy residues 415 to 431 (NYTTRYQSANKSPQGQV), 503 to 525 (GNLSTAEDLSSLTISDTEPQHAS), and 534 to 545 (DRSVSSGLSETE).

The protein belongs to the CCR4/nocturin family. As to quaternary structure, component of the CCR4-NOT complex, at least composed of CRR4 and CAF1 proteins. Mg(2+) serves as cofactor.

It is found in the nucleus. The protein resides in the cytoplasm. The enzyme catalyses Exonucleolytic cleavage of poly(A) to 5'-AMP.. Acts as a catalytic component of the CCR4-NOT core complex, which in the nucleus seems to be a general transcription factor, and in the cytoplasm the major mRNA deadenylase involved in mRNA turnover. This chain is Carbon catabolite repressor protein 4 homolog 6 (CCR4-6), found in Arabidopsis thaliana (Mouse-ear cress).